A 139-amino-acid chain; its full sequence is Phosphoribosyl-AMP cyclohydrolase (139 aa).

A Mg(2+)-binding site is contributed by aspartate 92. Cysteine 93 lines the Zn(2+) pocket. Residues aspartate 94 and aspartate 96 each coordinate Mg(2+). 2 residues coordinate Zn(2+): cysteine 111 and cysteine 118.

The protein belongs to the PRA-CH family. Homodimer. It depends on Mg(2+) as a cofactor. The cofactor is Zn(2+).

The protein localises to the cytoplasm. It catalyses the reaction 1-(5-phospho-beta-D-ribosyl)-5'-AMP + H2O = 1-(5-phospho-beta-D-ribosyl)-5-[(5-phospho-beta-D-ribosylamino)methylideneamino]imidazole-4-carboxamide. Its pathway is amino-acid biosynthesis; L-histidine biosynthesis; L-histidine from 5-phospho-alpha-D-ribose 1-diphosphate: step 3/9. Its function is as follows. Catalyzes the hydrolysis of the adenine ring of phosphoribosyl-AMP. In Caulobacter vibrioides (strain ATCC 19089 / CIP 103742 / CB 15) (Caulobacter crescentus), this protein is Phosphoribosyl-AMP cyclohydrolase.